Reading from the N-terminus, the 491-residue chain is Stromelysin-3 (491 aa).

The N-terminal stretch at 1–35 (MARAACLLRAISRALLLPLPLLLLLLLLLPPQLMA) is a signal peptide. A propeptide spans 36-101 (RARPPENHRH…VLNARNRQKR (66 aa)) (activation peptide). The short motif at 82–89 (LRCGVPDP) is the Cysteine switch element. Positions 84, 168, and 170 each coordinate Zn(2+). Residues Asp175, Gly176, Gly178, and Ile180 each coordinate Ca(2+). Positions 183, 196, and 218 each coordinate Zn(2+). Glu219 is an active-site residue. Positions 222 and 228 each coordinate Zn(2+). The interval 260–279 (YGRPQLTPTSPTPTLSSQAG) is disordered. The span at 263 to 277 (PQLTPTSPTPTLSSQ) shows a compositional bias: low complexity. Cys297 and Cys483 are oxidised to a cystine. Hemopexin repeat units follow at residues 298 to 342 (ETSF…WQGL), 343 to 385 (PSPV…KLGL), 387 to 435 (GSPV…WRGV), and 436 to 483 (PSEI…FFDC).

The protein belongs to the peptidase M10A family. The cofactor is Ca(2+). Requires Zn(2+) as cofactor. Post-translationally, the precursor is cleaved by a furin endopeptidase. Highly expressed in ovary and uterus.

Its subcellular location is the secreted. It is found in the extracellular space. The protein resides in the extracellular matrix. In terms of biological role, may play an important role in the progression of epithelial malignancies. The chain is Stromelysin-3 (Mmp11) from Rattus norvegicus (Rat).